A 957-amino-acid polypeptide reads, in one-letter code: Valine--tRNA ligase (957 aa).

A 'HIGH' region motif is present at residues 42–52; it reads PNVTGSLHMGH. The 'KMSKS' region motif lies at 554–558; sequence KMSKS. Position 557 (K557) interacts with ATP. Positions 890–956 form a coiled coil; that stretch reads DKDAELARLA…LEAQQETIAA (67 aa).

Belongs to the class-I aminoacyl-tRNA synthetase family. ValS type 1 subfamily. Monomer.

The protein localises to the cytoplasm. The enzyme catalyses tRNA(Val) + L-valine + ATP = L-valyl-tRNA(Val) + AMP + diphosphate. Its function is as follows. Catalyzes the attachment of valine to tRNA(Val). As ValRS can inadvertently accommodate and process structurally similar amino acids such as threonine, to avoid such errors, it has a 'posttransfer' editing activity that hydrolyzes mischarged Thr-tRNA(Val) in a tRNA-dependent manner. The protein is Valine--tRNA ligase of Aliivibrio fischeri (strain ATCC 700601 / ES114) (Vibrio fischeri).